Here is a 137-residue protein sequence, read N- to C-terminus: Small ribosomal subunit protein uS12 (137 aa).

Asp102 is subject to 3-methylthioaspartic acid.

The protein belongs to the universal ribosomal protein uS12 family. In terms of assembly, part of the 30S ribosomal subunit. Contacts proteins S8 and S17. May interact with IF1 in the 30S initiation complex.

With S4 and S5 plays an important role in translational accuracy. Functionally, interacts with and stabilizes bases of the 16S rRNA that are involved in tRNA selection in the A site and with the mRNA backbone. Located at the interface of the 30S and 50S subunits, it traverses the body of the 30S subunit contacting proteins on the other side and probably holding the rRNA structure together. The combined cluster of proteins S8, S12 and S17 appears to hold together the shoulder and platform of the 30S subunit. The chain is Small ribosomal subunit protein uS12 from Mycoplasmopsis agalactiae (strain NCTC 10123 / CIP 59.7 / PG2) (Mycoplasma agalactiae).